Here is a 397-residue protein sequence, read N- to C-terminus: Acetate kinase (397 aa).

Asparagine 8 lines the Mg(2+) pocket. Lysine 15 is an ATP binding site. Arginine 89 lines the substrate pocket. The active-site Proton donor/acceptor is aspartate 146. Residues histidine 206–glycine 210, aspartate 281–arginine 283, and glycine 329–asparagine 333 contribute to the ATP site. Glutamate 382 is a binding site for Mg(2+).

Belongs to the acetokinase family. As to quaternary structure, homodimer. It depends on Mg(2+) as a cofactor. Requires Mn(2+) as cofactor.

Its subcellular location is the cytoplasm. The enzyme catalyses acetate + ATP = acetyl phosphate + ADP. It participates in metabolic intermediate biosynthesis; acetyl-CoA biosynthesis; acetyl-CoA from acetate: step 1/2. Catalyzes the formation of acetyl phosphate from acetate and ATP. Can also catalyze the reverse reaction. This chain is Acetate kinase, found in Bacillus mycoides (strain KBAB4) (Bacillus weihenstephanensis).